Here is a 963-residue protein sequence, read N- to C-terminus: Putative RNA Helicase B962L (963 aa).

The Helicase ATP-binding domain occupies 43–229; it reads IPTSLADRVL…FGIGKENIIL (187 aa). Position 56–63 (56–63) interacts with ATP; that stretch reads SRTGSGKS. Residues 167-170 carry the DEAH box motif; that stretch reads DEAH. A Helicase C-terminal domain is found at 253–459; the sequence is ACETALTIHK…TIKKNKEGVF (207 aa). A helical membrane pass occupies residues 521-541; that stretch reads GYFWQAAISDIATILAVVSVV.

It belongs to the DEAD box helicase family. DEAH subfamily.

It localises to the host membrane. Its subcellular location is the virion. The catalysed reaction is ATP + H2O = ADP + phosphate + H(+). This chain is Putative RNA Helicase B962L, found in Ornithodoros (relapsing fever ticks).